Reading from the N-terminus, the 185-residue chain is Acireductone dioxygenase (185 aa).

The disordered stretch occupies residues 1–22 (MSRLSIHPEGSTNATSPAEPLL). 4 residues coordinate Fe(2+): histidine 102, histidine 104, glutamate 108, and histidine 146. Positions 102, 104, 108, and 146 each coordinate Ni(2+).

The protein belongs to the acireductone dioxygenase (ARD) family. Monomer. The cofactor is Fe(2+). Requires Ni(2+) as cofactor.

It catalyses the reaction 1,2-dihydroxy-5-(methylsulfanyl)pent-1-en-3-one + O2 = 3-(methylsulfanyl)propanoate + CO + formate + 2 H(+). The enzyme catalyses 1,2-dihydroxy-5-(methylsulfanyl)pent-1-en-3-one + O2 = 4-methylsulfanyl-2-oxobutanoate + formate + 2 H(+). The protein operates within amino-acid biosynthesis; L-methionine biosynthesis via salvage pathway; L-methionine from S-methyl-5-thio-alpha-D-ribose 1-phosphate: step 5/6. Functionally, catalyzes 2 different reactions between oxygen and the acireductone 1,2-dihydroxy-3-keto-5-methylthiopentene (DHK-MTPene) depending upon the metal bound in the active site. Fe-containing acireductone dioxygenase (Fe-ARD) produces formate and 2-keto-4-methylthiobutyrate (KMTB), the alpha-ketoacid precursor of methionine in the methionine recycle pathway. Ni-containing acireductone dioxygenase (Ni-ARD) produces methylthiopropionate, carbon monoxide and formate, and does not lie on the methionine recycle pathway. The protein is Acireductone dioxygenase of Prochlorococcus marinus (strain MIT 9313).